A 482-amino-acid polypeptide reads, in one-letter code: Alanine aminotransferase 2 (482 aa).

Lys-299 is modified (N6-(pyridoxal phosphate)lysine).

The protein belongs to the class-I pyridoxal-phosphate-dependent aminotransferase family. Alanine aminotransferase subfamily. As to quaternary structure, homodimer. Pyridoxal 5'-phosphate is required as a cofactor.

It catalyses the reaction L-alanine + 2-oxoglutarate = pyruvate + L-glutamate. It participates in photosynthesis; C4 acid pathway. The protein operates within amino-acid degradation; L-alanine degradation via transaminase pathway; pyruvate from L-alanine: step 1/1. Its function is as follows. Transfer of C3 units between the cytosol of mesophyll and bundle sheath cells to maintain a nitrogen-carbon balance in the C4-dicarboxylic pathway. The protein is Alanine aminotransferase 2 of Hordeum vulgare (Barley).